Reading from the N-terminus, the 101-residue chain is Immunity protein CdiI-2 (101 aa).

Specifically interacts with the truncated CT fragment of cognate toxin protein CdiA-2, which inhibits CdiA-2 tRNA nuclease activity.

In terms of biological role, immunity protein component of a toxin-immunity protein module, which functions as a cellular contact-dependent growth inhibition (CDI) system. CDI modules allow bacteria to communicate with and inhibit the growth of closely related neighboring bacteria in a contact-dependent fashion. Neutralizes the toxic activity of cognate toxin CdiA (C-terminal 301 residue CT fragment) upon expression in E.coli. Does not inhibit toxic activity of CdiA from other strains of B.pseudomallei. Its function is as follows. Expression of this cdiAIB locus in B.thailandensis confers protection against other bacteria carrying the locus; growth inhibition requires cellular contact. This is Immunity protein CdiI-2 (cdiI2) from Burkholderia pseudomallei (strain 1026b).